The following is a 437-amino-acid chain: Probable N-acetylmuramidase (437 aa).

Positions 1-57 (MPVSRVKVKNRHLKKKTKKPLAFYKPTTKFVGAVLIAGTLTTTHELLLQQTSPMVQA) are cleaved as a signal peptide. 3 disordered regions span residues 217–244 (SSAG…SSTT), 291–319 (SSTN…ASQT), and 367–392 (ATSN…NSNA). Positions 243–286 (TTYTVKSGDTLWGISQRYGISVAQIQSANNLKSTIIYIGQKLLL) constitute a LysM 1 domain. Low complexity predominate over residues 291-317 (SSTNSGGSNNSASTTPTTSVTPAKPAS). The 44-residue stretch at 319 to 362 (TSVKVKSGDTLWALSVKYKTSIAQLKSWNHLSSDTIYIGQNLIV) folds into the LysM 2 domain. The 44-residue stretch at 393–436 (SIHKVVKGDTLWGLSQKSGSPIASIKAWNHLSSDTILIGQYLRI) folds into the LysM 3 domain.

Belongs to the glycosyl hydrolase 73 family.

It localises to the secreted. It catalyses the reaction Hydrolysis of (1-&gt;4)-beta-linkages between N-acetylmuramic acid and N-acetyl-D-glucosamine residues in a peptidoglycan and between N-acetyl-D-glucosamine residues in chitodextrins.. Functionally, hydrolyzes the cell wall of L.lactis and M.lysodeikticus. Required for cell separation during growth. The polypeptide is Probable N-acetylmuramidase (acmA) (Lactococcus lactis subsp. cremoris (Streptococcus cremoris)).